The chain runs to 332 residues: Phosphate acyltransferase (332 aa).

It belongs to the PlsX family. Homodimer. Probably interacts with PlsY.

The protein resides in the cytoplasm. It catalyses the reaction a fatty acyl-[ACP] + phosphate = an acyl phosphate + holo-[ACP]. The protein operates within lipid metabolism; phospholipid metabolism. Its function is as follows. Catalyzes the reversible formation of acyl-phosphate (acyl-PO(4)) from acyl-[acyl-carrier-protein] (acyl-ACP). This enzyme utilizes acyl-ACP as fatty acyl donor, but not acyl-CoA. The chain is Phosphate acyltransferase from Bacillus pumilus (strain SAFR-032).